A 68-amino-acid polypeptide reads, in one-letter code: ATP synthase protein 8 (68 aa).

Residues 8–24 (VWPTIIMSMLLALFLLM) form a helical membrane-spanning segment. Lys-54 carries the post-translational modification N6-acetyllysine; alternate. Lys-54 carries the post-translational modification N6-succinyllysine; alternate. At Lys-57 the chain carries N6-acetyllysine.

This sequence belongs to the ATPase protein 8 family. F-type ATPases have 2 components, CF(1) - the catalytic core - and CF(0) - the membrane proton channel. Component of an ATP synthase complex composed of ATP5PB, ATP5MC1, ATP5F1E, ATP5PD, ATP5ME, ATP5PF, ATP5MF, MT-ATP6, MT-ATP8, ATP5F1A, ATP5F1B, ATP5F1D, ATP5F1C, ATP5PO, ATP5MG, ATP5MK and ATP5MJ. Interacts with PRICKLE3.

It is found in the mitochondrion membrane. Functionally, mitochondrial membrane ATP synthase (F(1)F(0) ATP synthase or Complex V) produces ATP from ADP in the presence of a proton gradient across the membrane which is generated by electron transport complexes of the respiratory chain. F-type ATPases consist of two structural domains, F(1) - containing the extramembraneous catalytic core and F(0) - containing the membrane proton channel, linked together by a central stalk and a peripheral stalk. During catalysis, ATP synthesis in the catalytic domain of F(1) is coupled via a rotary mechanism of the central stalk subunits to proton translocation. Part of the complex F(0) domain. Minor subunit located with subunit a in the membrane. This chain is ATP synthase protein 8 (MT-ATP8), found in Hylobates lar (Lar gibbon).